We begin with the raw amino-acid sequence, 133 residues long: Cell division protein FtsL (133 aa).

At 1 to 45 (MAVEKVYQPYDEQVYNSIPKQQPQTKPEKKTVSRKVVVQLTKFEK) the chain is on the cytoplasmic side. A helical membrane pass occupies residues 46 to 65 (VLYITLITVIAMLSIYMLSL). Residues 66–133 (KMDAYDTRGK…VVRSNGEAKN (68 aa)) are Extracellular-facing.

Belongs to the FtsL family.

The protein resides in the cell membrane. Functionally, essential cell division protein. In Staphylococcus aureus (strain NCTC 8325 / PS 47), this protein is Cell division protein FtsL.